The primary structure comprises 667 residues: DNA ligase (667 aa).

NAD(+) is bound by residues Asp-34 to Asp-38, Ser-83 to Leu-84, and Glu-117. The N6-AMP-lysine intermediate role is filled by Lys-119. Positions 140, 176, 289, and 313 each coordinate NAD(+). Zn(2+)-binding residues include Cys-407, Cys-410, Cys-425, and Cys-431. The BRCT domain occupies Gln-591 to Met-667.

The protein belongs to the NAD-dependent DNA ligase family. LigA subfamily. Mg(2+) is required as a cofactor. Requires Mn(2+) as cofactor.

It catalyses the reaction NAD(+) + (deoxyribonucleotide)n-3'-hydroxyl + 5'-phospho-(deoxyribonucleotide)m = (deoxyribonucleotide)n+m + AMP + beta-nicotinamide D-nucleotide.. Its function is as follows. DNA ligase that catalyzes the formation of phosphodiester linkages between 5'-phosphoryl and 3'-hydroxyl groups in double-stranded DNA using NAD as a coenzyme and as the energy source for the reaction. It is essential for DNA replication and repair of damaged DNA. In Chlorobium chlorochromatii (strain CaD3), this protein is DNA ligase.